Here is a 140-residue protein sequence, read N- to C-terminus: Vesicle transport protein GOT1 (140 aa).

Transmembrane regions (helical) follow at residues 12–32 (IGLG…IFVF), 35–55 (GLIA…IGIN), 71–91 (ISFG…GLLL), and 96–116 (FLVL…RIPL).

Belongs to the GOT1 family. Homodimer. No interactions with STL1, STL2, CESA1, CESA3, CESA4, CESA6, CESA7 or CESA8.

The protein localises to the golgi apparatus membrane. In terms of biological role, may be involved in fusion of ER-derived transport vesicles with the Golgi complex. The protein is Vesicle transport protein GOT1 of Arabidopsis thaliana (Mouse-ear cress).